Here is a 368-residue protein sequence, read N- to C-terminus: Cobalt-precorrin-5B C(1)-methyltransferase (368 aa).

Belongs to the CbiD family.

The enzyme catalyses Co-precorrin-5B + S-adenosyl-L-methionine = Co-precorrin-6A + S-adenosyl-L-homocysteine. The protein operates within cofactor biosynthesis; adenosylcobalamin biosynthesis; cob(II)yrinate a,c-diamide from sirohydrochlorin (anaerobic route): step 6/10. In terms of biological role, catalyzes the methylation of C-1 in cobalt-precorrin-5B to form cobalt-precorrin-6A. The chain is Cobalt-precorrin-5B C(1)-methyltransferase from Synechococcus sp. (strain CC9605).